Here is a 597-residue protein sequence, read N- to C-terminus: Kelch-like protein 21 (597 aa).

Positions L35 to G103 constitute a BTB domain. The region spanning C138–E239 is the BACK domain. Kelch repeat units follow at residues I287–N335, D336–G382, L384–G422, R423–G470, M472–G512, and K513–R560. The tract at residues G570–H597 is disordered.

In terms of assembly, component of the BCR(KLHL21) E3 ubiquitin ligase complex, at least composed of CUL3, KLHL21 and RBX1.

Its subcellular location is the cytoplasm. The protein localises to the cytoskeleton. It localises to the spindle. The protein operates within protein modification; protein ubiquitination. Its function is as follows. Substrate-specific adapter of a BCR (BTB-CUL3-RBX1) E3 ubiquitin-protein ligase complex required for efficient chromosome alignment and cytokinesis. The BCR(KLHL21) E3 ubiquitin ligase complex regulates localization of the chromosomal passenger complex (CPC) from chromosomes to the spindle midzone in anaphase and mediates the ubiquitination of AURKB. Ubiquitination of AURKB by BCR(KLHL21) E3 ubiquitin ligase complex may not lead to its degradation by the proteasome. The chain is Kelch-like protein 21 (Klhl21) from Mus musculus (Mouse).